The chain runs to 194 residues: Oligoribonuclease (194 aa).

The Exonuclease domain maps to 11–174 (LIWIDLEMTG…SDVRDSIDEL (164 aa)). The active site involves Tyr-132.

Belongs to the oligoribonuclease family.

The protein resides in the cytoplasm. In terms of biological role, 3'-to-5' exoribonuclease specific for small oligoribonucleotides. The sequence is that of Oligoribonuclease from Xanthomonas campestris pv. campestris (strain ATCC 33913 / DSM 3586 / NCPPB 528 / LMG 568 / P 25).